Here is a 312-residue protein sequence, read N- to C-terminus: Ribosomal protein L11 methyltransferase (312 aa).

Positions 163, 184, 206, and 248 each coordinate S-adenosyl-L-methionine.

The protein belongs to the methyltransferase superfamily. PrmA family.

It is found in the cytoplasm. It carries out the reaction L-lysyl-[protein] + 3 S-adenosyl-L-methionine = N(6),N(6),N(6)-trimethyl-L-lysyl-[protein] + 3 S-adenosyl-L-homocysteine + 3 H(+). Methylates ribosomal protein L11. This chain is Ribosomal protein L11 methyltransferase, found in Clostridium botulinum (strain Loch Maree / Type A3).